The following is a 33-amino-acid chain: Gaegurin-1 (33 aa).

An intrachain disulfide couples Cys-27 to Cys-33.

The protein belongs to the frog skin active peptide (FSAP) family. Brevinin subfamily. Monomer. Expressed by the skin glands.

It localises to the secreted. Its function is as follows. Has a non-hemolytic activity. Has a broad spectrum of activity against both Gram-positive and Gram-negative bacteria, fungi and protozoa. The chain is Gaegurin-1 (GGN1) from Glandirana rugosa (Japanese wrinkled frog).